The chain runs to 904 residues: Shieldin complex subunit 2 (904 aa).

A sufficient for interaction with SHLD3 and MAD2L2 region spans residues 1–60 (MSGGSQVHIFWGAPVAPLKMTVSQDTASLMSVADPWKKIHLLYSQHSLYLKDEKQHKNLE). The tract at residues 1–568 (MSGGSQVHIF…AYVSSKHSYL (568 aa)) is interaction with ASTE1. The segment at 721–891 (KCSGVVLIQA…LQQDFSLLDF (171 aa)) is mediates interaction with SHLD1.

The protein belongs to the SHLD2 family. Component of the shieldin complex, consisting of SHLD1, SHLD2, SHLD3 and MAD2L2/REV7. Within the complex, SHLD2 forms a scaffold which interacts with a SHLD3-MAD2L2 subcomplex via its N-terminus, and with SHLD1 via its C-terminus. Interacts with TP53BP1. Interacts with RIF1. Interacts with ASTE1.

The protein resides in the chromosome. Its function is as follows. Component of the shieldin complex, which plays an important role in repair of DNA double-stranded breaks (DSBs). During G1 and S phase of the cell cycle, the complex functions downstream of TP53BP1 to promote non-homologous end joining (NHEJ) and suppress DNA end resection. Mediates various NHEJ-dependent processes including immunoglobulin class-switch recombination, and fusion of unprotected telomeres. The chain is Shieldin complex subunit 2 from Pongo abelii (Sumatran orangutan).